The following is a 509-amino-acid chain: Cobyric acid synthase (509 aa).

Residues 262-459 (EIKVGIIKLP…IHGIFENDSW (198 aa)) form the GATase cobBQ-type domain. The Nucleophile role is filled by Cys343. His451 is an active-site residue.

This sequence belongs to the CobB/CobQ family. CobQ subfamily.

It functions in the pathway cofactor biosynthesis; adenosylcobalamin biosynthesis. Catalyzes amidations at positions B, D, E, and G on adenosylcobyrinic A,C-diamide. NH(2) groups are provided by glutamine, and one molecule of ATP is hydrogenolyzed for each amidation. In Prochlorococcus marinus (strain MIT 9215), this protein is Cobyric acid synthase.